The following is a 211-amino-acid chain: uncharacterized protein (211 aa).

The N-terminal stretch at 1–20 (MSRVQISTVLAIDTATPAVT) is a signal peptide.

It to M.leprae ML0378.

This is an uncharacterized protein from Mycobacterium tuberculosis (strain CDC 1551 / Oshkosh).